A 382-amino-acid polypeptide reads, in one-letter code: Flap endonuclease 1 (382 aa).

The segment at 1–104 is N-domain; that stretch reads MGIKGLSQVI…GELEKRTERR (104 aa). Mg(2+) is bound at residue D34. Residues R47 and R70 each coordinate DNA. The Mg(2+) site is built by D86, E158, E160, D179, and D181. The tract at residues 122-253 is I-domain; that stretch reads EAEKFERRLV…KKAVELIKQH (132 aa). E158 serves as a coordination point for DNA. Positions 231 and 233 each coordinate DNA. Residue D233 coordinates Mg(2+). Residues 336-344 form an interaction with PCNA region; it reads TQGRIDSFF. The span at 359 to 368 shows a compositional bias: basic and acidic residues; the sequence is KAQEEAEKMK. Residues 359 to 382 are disordered; it reads KAQEEAEKMKKGGKKSGPPKKKAK. Residues 369-382 are compositionally biased toward basic residues; that stretch reads KGGKKSGPPKKKAK.

This sequence belongs to the XPG/RAD2 endonuclease family. FEN1 subfamily. As to quaternary structure, interacts with PCNA. Three molecules of crn-1 bind to one PCNA trimer with each molecule binding to one PCNA monomer. PCNA stimulates the nuclease activity without altering cleavage specificity. The cofactor is Mg(2+). Phosphorylated. Phosphorylation upon DNA damage induces relocalization to the nuclear plasma.

The protein localises to the nucleus. It is found in the nucleolus. The protein resides in the nucleoplasm. It localises to the mitochondrion. In terms of biological role, structure-specific nuclease with 5'-flap endonuclease and 5'-3' exonuclease activities involved in DNA replication and repair. During DNA replication, cleaves the 5'-overhanging flap structure that is generated by displacement synthesis when DNA polymerase encounters the 5'-end of a downstream Okazaki fragment. It enters the flap from the 5'-end and then tracks to cleave the flap base, leaving a nick for ligation. Also involved in the long patch base excision repair (LP-BER) pathway, by cleaving within the apurinic/apyrimidinic (AP) site-terminated flap. Acts as a genome stabilization factor that prevents flaps from equilibrating into structures that lead to duplications and deletions. Also possesses 5'-3' exonuclease activity on nicked or gapped double-stranded DNA, and exhibits RNase H activity. Also involved in replication and repair of rDNA and in repairing mitochondrial DNA. The chain is Flap endonuclease 1 from Caenorhabditis briggsae.